Reading from the N-terminus, the 323-residue chain is Pseudouridylate synthase TRUB2, mitochondrial (323 aa).

Residue Asp-98 is the Nucleophile of the active site. The segment at 302–323 is disordered; the sequence is SGHQQQLPSAGQPWASRVQAPL.

The protein belongs to the pseudouridine synthase TruB family. As to quaternary structure, forms a regulatory protein-RNA complex, consisting of RCC1L, NGRN, RPUSD3, RPUSD4, TRUB2, FASTKD2 and 16S mt-rRNA.

The protein localises to the mitochondrion matrix. The catalysed reaction is a uridine in mRNA = a pseudouridine in mRNA. It carries out the reaction uridine(55) in tRNA = pseudouridine(55) in tRNA. Its function is as follows. Minor enzyme contributing to the isomerization of uridine to pseudouridine (pseudouridylation) of specific mitochondrial mRNAs (mt-mRNAs) such as COXI and COXIII mt-mRNAs. As a component of a functional protein-RNA module, consisting of RCC1L, NGRN, RPUSD3, RPUSD4, TRUB2, FASTKD2 and 16S mitochondrial ribosomal RNA (16S mt-rRNA), controls 16S mt-rRNA abundance and is required for intra-mitochondrial translation. Also catalyzes pseudouridylation of some tRNAs, including synthesis of pseudouridine(55) from uracil-55, in the psi GC loop of a subset of tRNAs. In Rattus norvegicus (Rat), this protein is Pseudouridylate synthase TRUB2, mitochondrial.